Here is a 91-residue protein sequence, read N- to C-terminus: Large ribosomal subunit protein eL37B (91 aa).

Residues Cys-19, Cys-22, Cys-34, and Cys-37 each coordinate Zn(2+). The C4-type zinc-finger motif lies at 19–37 (CRRCGKRSFHIQKSTCACC).

It belongs to the eukaryotic ribosomal protein eL37 family. As to quaternary structure, component of the large ribosomal subunit (LSU). Mature yeast ribosomes consist of a small (40S) and a large (60S) subunit. The 40S small subunit contains 1 molecule of ribosomal RNA (18S rRNA) and at least 33 different proteins. The large 60S subunit contains 3 rRNA molecules (25S, 5.8S and 5S rRNA) and at least 46 different proteins. Zn(2+) is required as a cofactor.

The protein localises to the cytoplasm. Component of the ribosome, a large ribonucleoprotein complex responsible for the synthesis of proteins in the cell. The small ribosomal subunit (SSU) binds messenger RNAs (mRNAs) and translates the encoded message by selecting cognate aminoacyl-transfer RNA (tRNA) molecules. The large subunit (LSU) contains the ribosomal catalytic site termed the peptidyl transferase center (PTC), which catalyzes the formation of peptide bonds, thereby polymerizing the amino acids delivered by tRNAs into a polypeptide chain. The nascent polypeptides leave the ribosome through a tunnel in the LSU and interact with protein factors that function in enzymatic processing, targeting, and the membrane insertion of nascent chains at the exit of the ribosomal tunnel. This chain is Large ribosomal subunit protein eL37B (rpl3702), found in Schizosaccharomyces pombe (strain 972 / ATCC 24843) (Fission yeast).